Consider the following 87-residue polypeptide: Cell division topological specificity factor (87 aa).

The protein belongs to the MinE family.

In terms of biological role, prevents the cell division inhibition by proteins MinC and MinD at internal division sites while permitting inhibition at polar sites. This ensures cell division at the proper site by restricting the formation of a division septum at the midpoint of the long axis of the cell. In Blochmanniella pennsylvanica (strain BPEN), this protein is Cell division topological specificity factor.